A 132-amino-acid chain; its full sequence is Antimicrobial protein Ace-AMP1 (132 aa).

Residues 1–27 (MVRVVSLLAASTFILLIMIISSPYANS) form the signal peptide. Disulfide bonds link C31-C76, C41-C54, C55-C100, and C74-C116.

This sequence belongs to the plant LTP family. Highly divergent. In terms of assembly, monomer.

Functionally, antifungal and antibacterial activity against the Gram-positive bacteria B.megaterium and S.lutea. The protein is Antimicrobial protein Ace-AMP1 of Allium cepa (Onion).